The chain runs to 682 residues: Actin-binding LIM protein 3 (682 aa).

Methionine 1 carries the N-acetylmethionine modification. 4 LIM zinc-binding domains span residues 21 to 80 (IQCY…LYGT), 80 to 140 (TRCD…MTSS), 149 to 208 (SHCA…QFGI), and 208 to 268 (IKCE…ARAE). Serine 277, serine 280, serine 282, serine 286, serine 290, serine 337, serine 372, and serine 373 each carry phosphoserine. Disordered stretches follow at residues 372–426 (SSPG…SYQA) and 440–475 (YRKPPIYKRHGDLSTATKSKTSEDISQASKYSPAYS). The residue at position 376 (tyrosine 376) is a Phosphotyrosine. Phosphoserine occurs at positions 379 and 388. Composition is skewed to polar residues over residues 380–393 (PTYSRQGMSPTFSR), 405–425 (GRSSPYHSQLDVRSSTPTSYQ), and 453–466 (STATKSKTSEDISQ). 3 positions are modified to phosphoserine: serine 492, serine 502, and serine 503. Position 542 is a phosphothreonine (threonine 542). Residues serine 566, serine 575, and serine 606 each carry the phosphoserine modification. The region spanning 614–682 (MREYKIYPYE…NELKKQARLF (69 aa)) is the HP domain. Arginine 630 carries the post-translational modification Omega-N-methylarginine.

Directly interacts with F-actin and ABRA. Expressed in heart, brain, lung and liver. In the brain, highly expressed in the olfactory bulb. In the hippocampus, expressed selectively in the CA2 and CA3 fields. In the cerebellum, expressed in internal granular cells.

It is found in the cytoplasm. In terms of biological role, may act as scaffold protein. May stimulate ABRA activity and ABRA-dependent SRF transcriptional activity. The sequence is that of Actin-binding LIM protein 3 (Ablim3) from Mus musculus (Mouse).